Consider the following 639-residue polypeptide: Coiled-coil domain-containing protein 93 homolog (639 aa).

A disordered region spans residues 250-275 (KLESQLSGKDGSGKDTTEAEREEEEK). The segment covering 260 to 275 (GSGKDTTEAEREEEEK) has biased composition (basic and acidic residues). A coiled-coil region spans residues 332–492 (AEKLHRQKIT…KNRDISLIQR (161 aa)).

This sequence belongs to the CCDC93 family.

The chain is Coiled-coil domain-containing protein 93 homolog from Dictyostelium discoideum (Social amoeba).